The following is a 1567-amino-acid chain: ABC multidrug transporter MDR1 (1567 aa).

The span at 1-11 (MASQPPQPPSG) shows a compositional bias: pro residues. Positions 1 to 37 (MASQPPQPPSGQPDTQYEEYQSEVITETTNRPTPAAD) are disordered. Residues 22-32 (SEVITETTNRP) are compositionally biased toward polar residues. N-linked (GlcNAc...) asparagine glycans are attached at residues Asn-149, Asn-157, and Asn-356. Residues 167-432 (VQYQDTFLSP…FEEMGWYCPP (266 aa)) form the ABC transporter 1 domain. 6 helical membrane-spanning segments follow: residues 543–563 (STIATNISQIMMALIIGSLFF), 571–591 (GFFAKGSVIFFAILLNGLMSI), 636–656 (IPIKFLLALVFNIIIYFLGGL), 661–681 (AKFFIFFLFTFITILTMSAIF), 691–711 (IPQALALAGVMILALVIYTGF), and 798–818 (LGILLGFLAFFYFVYLVVSEL). N-linked (GlcNAc...) asparagine glycans are attached at residues Asn-819, Asn-895, and Asn-912. The ABC transporter 2 domain maps to 891–1134 (FTWRNVTYDI…LLNYFETHGA (244 aa)). 927 to 934 (GVSGAGKT) lines the ATP pocket. A disordered region spans residues 1172 to 1202 (ESRHVQQELDRIQSETSKRNEGHGQSAEKEP). A helical membrane pass occupies residues 1231 to 1251 (IWGKLLLGLTSALFIGFSFFL). The N-linked (GlcNAc...) asparagine glycan is linked to Asn-1253. A run of 5 helical transmembrane segments spans residues 1257-1277 (AGLQNSLFSIFMLTTIFSSLV), 1305-1325 (VFLLANIIVEIPYQILLGIIA), 1345-1365 (ILLLYCVQFFIFASTFAQMII), 1372-1392 (ETAGGIATTMFGLMVTFNGVL), and 1498-1518 (GIGWAYIVFNIFATVALYYLI).

This sequence belongs to the ABC transporter superfamily. ABCG family. PDR (TC 3.A.1.205) subfamily.

It is found in the cell membrane. The enzyme catalyses voriconazole(in) + ATP + H2O = voriconazole(out) + ADP + phosphate + H(+). The catalysed reaction is fluconazole(in) + ATP + H2O = fluconazole(out) + ADP + phosphate + H(+). It carries out the reaction (R)-miconazole(in) + ATP + H2O = (R)-miconazole(out) + ADP + phosphate + H(+). It catalyses the reaction (S)-miconazole(in) + ATP + H2O = (S)-miconazole(out) + ADP + phosphate + H(+). Pleiotropic ABC efflux transporter that may be involved in the modulation susceptibility to a wide range of unrelated cytotoxic compounds. The chain is ABC multidrug transporter MDR1 from Trichophyton equinum (strain ATCC MYA-4606 / CBS 127.97) (Horse ringworm fungus).